The following is an 86-amino-acid chain: uncharacterized protein (86 aa).

TPR repeat units follow at residues Ala8–Tyr41 and Arg42–Leu75.

This is an uncharacterized protein from Methanocaldococcus jannaschii (strain ATCC 43067 / DSM 2661 / JAL-1 / JCM 10045 / NBRC 100440) (Methanococcus jannaschii).